Consider the following 203-residue polypeptide: Small ribosomal subunit protein uS4 (203 aa).

An S4 RNA-binding domain is found at 93–156 (TRLDNLVFRL…QNLAIVNEAI (64 aa)).

This sequence belongs to the universal ribosomal protein uS4 family. In terms of assembly, part of the 30S ribosomal subunit. Contacts protein S5. The interaction surface between S4 and S5 is involved in control of translational fidelity.

In terms of biological role, one of the primary rRNA binding proteins, it binds directly to 16S rRNA where it nucleates assembly of the body of the 30S subunit. Its function is as follows. With S5 and S12 plays an important role in translational accuracy. The polypeptide is Small ribosomal subunit protein uS4 (Lacticaseibacillus casei (strain BL23) (Lactobacillus casei)).